An 87-amino-acid chain; its full sequence is Antitoxin RelB1 (87 aa).

Its function is as follows. Antitoxin component of a type II toxin-antitoxin (TA) system. Neutralizes the effect of cognate toxin RelE1, but no other RelE or ParE toxin. This is Antitoxin RelB1 (relB1) from Caulobacter vibrioides (strain ATCC 19089 / CIP 103742 / CB 15) (Caulobacter crescentus).